The chain runs to 345 residues: Linoleate 10R-lipoxygenase COP4 (345 aa).

Aspartate 87, aspartate 91, asparagine 222, serine 226, and glutamate 230 together coordinate Mg(2+). The DDXXD motif motif lies at 87–91; the sequence is DEISD.

This sequence belongs to the terpene synthase family. It depends on Mg(2+) as a cofactor.

The enzyme catalyses (2E,6E)-farnesyl diphosphate + H2O = cubebol + diphosphate. It catalyses the reaction (2E,6E)-farnesyl diphosphate = beta-copaene + diphosphate. The catalysed reaction is (2E,6E)-farnesyl diphosphate = beta-cubebene + diphosphate. It carries out the reaction (2E,6E)-farnesyl diphosphate = (+)-sativene + diphosphate. In terms of biological role, sesquiterpene synthase that catalyzes the cyclization of farnesyl diphosphate (FPP) into multiple products, including germacrene D, beta-copaene, beta-cubebene, (+)-sativene and cubebol, a natural sesquiterpene alcohol used in the food industry for its cooling and refreshing taste. Terpenoid hydrocarbons resulting from cyclization of farnesyl diphosphate are intermediates in the biosynthesis of biologically active compounds such as antibiotics, toxins and pheromones. This chain is Linoleate 10R-lipoxygenase COP4 (COP4), found in Coprinopsis cinerea (strain Okayama-7 / 130 / ATCC MYA-4618 / FGSC 9003) (Inky cap fungus).